Here is a 107-residue protein sequence, read N- to C-terminus: UPF0145 protein Sfri_2095 (107 aa).

This sequence belongs to the UPF0145 family.

The protein is UPF0145 protein Sfri_2095 of Shewanella frigidimarina (strain NCIMB 400).